Consider the following 345-residue polypeptide: Alpha-2-HS-glycoprotein (345 aa).

Residues 1-18 (MKSLVLLLCFAQLWGCQS) form the signal peptide. One can recognise a Cystatin fetuin-A-type 1 domain in the interval 19–133 (APQGTGLGFR…QFRVMHTQCH (115 aa)). 6 disulfides stabilise this stretch: cysteine 32–cysteine 336, cysteine 89–cysteine 100, cysteine 114–cysteine 132, cysteine 146–cysteine 149, cysteine 208–cysteine 219, and cysteine 230–cysteine 247. Asparagine 99 is a glycosylation site (N-linked (GlcNAc...) asparagine). Serine 134 is modified (phosphoserine). At threonine 135 the chain carries Phosphothreonine. Phosphoserine is present on serine 138. The Cystatin fetuin-A-type 2 domain maps to 144-250 (KLCPRCPLLT…EEVSVACKLF (107 aa)). Residues asparagine 156 and asparagine 176 are each glycosylated (N-linked (GlcNAc...) asparagine). Serine 305, serine 309, serine 312, and serine 314 each carry phosphoserine. The disordered stretch occupies residues 312 to 334 (SASGETLHSPKVGQPGAAGPVSP).

It belongs to the fetuin family. In terms of processing, phosphorylated by FAM20C in the extracellular medium. Liver is the major site of synthesis, but fetuin is also expressed in limb buds and other extrahepatic tissues during development.

The protein resides in the secreted. Functionally, probably involved in differentiation. Its function is as follows. (Microbial infection) Facilitates invasion of hepatocytes by Plasmodium berghei sporozoites. The polypeptide is Alpha-2-HS-glycoprotein (Ahsg) (Mus musculus (Mouse)).